The sequence spans 364 residues: D-alanine--D-alanine ligase A (364 aa).

The region spanning K145–E348 is the ATP-grasp domain. Residue E175–E230 coordinates ATP. 3 residues coordinate Mg(2+): D302, E315, and N317.

Belongs to the D-alanine--D-alanine ligase family. Mg(2+) is required as a cofactor. Requires Mn(2+) as cofactor.

It localises to the cytoplasm. It catalyses the reaction 2 D-alanine + ATP = D-alanyl-D-alanine + ADP + phosphate + H(+). It functions in the pathway cell wall biogenesis; peptidoglycan biosynthesis. Cell wall formation. This Escherichia coli O157:H7 protein is D-alanine--D-alanine ligase A (ddlA).